Reading from the N-terminus, the 217-residue chain is GRB2-related adapter protein (217 aa).

The 58-residue stretch at 1-58 folds into the SH3 1 domain; it reads MESVALYSFQATESDELAFNKGDTLKILNMEDDQNWYKAELRGAEGFVPKNYIRVKPH. One can recognise an SH2 domain in the interval 60–152; sequence WYSGRISRQL…RRQIFLCDEQ (93 aa). One can recognise an SH3 2 domain in the interval 158–217; it reads SRACFAQAQFDFSAQDPSQLSLRRGDIVEVVEREDPHWWRGRAGGRLGFFPRSYVQPVHL.

It belongs to the GRB2/sem-5/DRK family. As to quaternary structure, associates through its SH2 domain with ligand-activated receptors for stem cell factor (KIT) and erythropoietin (EPOR). Also forms a stable complex with the Bcr-Abl oncoprotein. GRAP is associated with the Ras guanine nucleotide exchange factor SOS1, primarily through its N-terminal SH3 domain. Interacts with phosphorylated LAT upon TCR activation. Interacts with SHB. Expressed in inner ear, in neruonal fibers innervating cochlear and utricular auditory hair cells (at protein level).

It is found in the membrane. Its subcellular location is the synapse. Couples signals from receptor and cytoplasmic tyrosine kinases to the Ras signaling pathway. Plays a role in the inner ear and in hearing. The chain is GRB2-related adapter protein from Mus musculus (Mouse).